Reading from the N-terminus, the 396-residue chain is L-lactate dehydrogenase (396 aa).

The FMN hydroxy acid dehydrogenase domain occupies 1–380 (MIISAASDYR…SGDSLVQELG (380 aa)). Substrate is bound at residue tyrosine 24. Residues serine 106 and glutamine 127 each contribute to the FMN site. A substrate-binding site is contributed by tyrosine 129. Threonine 155 contacts FMN. Arginine 164 is a binding site for substrate. Lysine 251 provides a ligand contact to FMN. Histidine 275 functions as the Proton acceptor in the catalytic mechanism. Position 278 (arginine 278) interacts with substrate. FMN is bound at residue 306–330 (DSGIRNGLDVVRMIALGADTVLLGR).

The protein belongs to the FMN-dependent alpha-hydroxy acid dehydrogenase family. FMN is required as a cofactor.

It is found in the cell inner membrane. It catalyses the reaction (S)-lactate + A = pyruvate + AH2. Its function is as follows. Catalyzes the conversion of L-lactate to pyruvate. Is coupled to the respiratory chain. In Salmonella heidelberg (strain SL476), this protein is L-lactate dehydrogenase.